The following is a 326-amino-acid chain: MKNIAIIGASGYTGAQLTALIHAEAELTIQGLYVSENSLDKGKPLADLYPSYSHIALTLSPLSDDAKSKIVAEADAVVLATEHSVSLHLAAWFYSQGLAVFDLSGAYRFSDVAQYPKWYGFEHEYPEVLAKAVYGLAEWNAKEIAATKMIAVPGCYPTASLTALKPLVSLLTSAYPVINAVSGVTGAGRKAQLHTSFCEVSLTPYGVLGHRHQPEIATQLGQEVIFTPHLGNFKRGILATITVQLKPGTTTADVAAAYSVYAQAPLVTVKHNQFPKVDDVVLTPNCHLGWKFDENSGYLVVASAIDNLMKGAASQALQCIKIHFNL.

C155 is an active-site residue.

This sequence belongs to the NAGSA dehydrogenase family. Type 1 subfamily.

It is found in the cytoplasm. It catalyses the reaction N-acetyl-L-glutamate 5-semialdehyde + phosphate + NADP(+) = N-acetyl-L-glutamyl 5-phosphate + NADPH + H(+). Its pathway is amino-acid biosynthesis; L-arginine biosynthesis; N(2)-acetyl-L-ornithine from L-glutamate: step 3/4. Its function is as follows. Catalyzes the NADPH-dependent reduction of N-acetyl-5-glutamyl phosphate to yield N-acetyl-L-glutamate 5-semialdehyde. This is N-acetyl-gamma-glutamyl-phosphate reductase from Shewanella baltica (strain OS195).